The sequence spans 792 residues: Lon protease (792 aa).

Residues D16–L211 enclose the Lon N-terminal domain. An ATP-binding site is contributed by G361–T368. In terms of domain architecture, Lon proteolytic spans T597–P778. Catalysis depends on residues S684 and K727.

Belongs to the peptidase S16 family. Homohexamer. Organized in a ring with a central cavity.

It is found in the cytoplasm. The enzyme catalyses Hydrolysis of proteins in presence of ATP.. Its function is as follows. ATP-dependent serine protease that mediates the selective degradation of mutant and abnormal proteins as well as certain short-lived regulatory proteins. Required for cellular homeostasis and for survival from DNA damage and developmental changes induced by stress. Degrades polypeptides processively to yield small peptide fragments that are 5 to 10 amino acids long. Binds to DNA in a double-stranded, site-specific manner. The chain is Lon protease from Phenylobacterium zucineum (strain HLK1).